The chain runs to 478 residues: Protein nucleotidyltransferase YdiU (478 aa).

Gly-74, Gly-76, Arg-77, Lys-97, Asp-109, Gly-110, Arg-160, and Arg-167 together coordinate ATP. Asp-236 functions as the Proton acceptor in the catalytic mechanism. Residues Asn-237 and Asp-246 each contribute to the Mg(2+) site. An ATP-binding site is contributed by Asp-246.

Belongs to the SELO family. Requires Mg(2+) as cofactor. It depends on Mn(2+) as a cofactor.

The enzyme catalyses L-seryl-[protein] + ATP = 3-O-(5'-adenylyl)-L-seryl-[protein] + diphosphate. It carries out the reaction L-threonyl-[protein] + ATP = 3-O-(5'-adenylyl)-L-threonyl-[protein] + diphosphate. It catalyses the reaction L-tyrosyl-[protein] + ATP = O-(5'-adenylyl)-L-tyrosyl-[protein] + diphosphate. The catalysed reaction is L-histidyl-[protein] + UTP = N(tele)-(5'-uridylyl)-L-histidyl-[protein] + diphosphate. The enzyme catalyses L-seryl-[protein] + UTP = O-(5'-uridylyl)-L-seryl-[protein] + diphosphate. It carries out the reaction L-tyrosyl-[protein] + UTP = O-(5'-uridylyl)-L-tyrosyl-[protein] + diphosphate. Its function is as follows. Nucleotidyltransferase involved in the post-translational modification of proteins. It can catalyze the addition of adenosine monophosphate (AMP) or uridine monophosphate (UMP) to a protein, resulting in modifications known as AMPylation and UMPylation. The polypeptide is Protein nucleotidyltransferase YdiU (Chromobacterium violaceum (strain ATCC 12472 / DSM 30191 / JCM 1249 / CCUG 213 / NBRC 12614 / NCIMB 9131 / NCTC 9757 / MK)).